The chain runs to 685 residues: Mitotic interactor and substrate of PLK1 (685 aa).

Phosphoserine; by CDK1 is present on Ser-78. Disordered regions lie at residues 155 to 181 (SGTVATLQAAPDHGDPRTPGPPRSTPL) and 207 to 253 (NKEV…QGKG). Thr-172 carries the phosphothreonine; by CDK1 modification. Thr-179 is modified (phosphothreonine). Ser-214 carries the phosphoserine; by CDK1 modification. Position 219 is a phosphothreonine (Thr-219). Ser-284 carries the post-translational modification Phosphoserine; by CDK1. Thr-287 carries the phosphothreonine; by CDK1 modification. A disordered region spans residues 345–499 (GRPSLYVQRD…PWKLPRGSPQ (155 aa)). Ser-348 carries the post-translational modification Phosphoserine. Basic and acidic residues predominate over residues 355–371 (MVQETQREEDHRREGLH). Position 377 is a phosphothreonine; by CDK1 (Thr-377). Ser-382 is subject to Phosphoserine. Low complexity predominate over residues 392 to 417 (ALSSDSILSPDSILSPAPDARAADPA). Phosphoserine; by PLK1 occurs at positions 394, 395, and 397. A phosphoserine mark is found at Ser-406 and Ser-436. Residues 454–469 (SGLSTVDTEAATSPKA) show a composition bias toward polar residues. At Ser-477 the chain carries Phosphoserine; by PLK1. A compositionally biased stretch (polar residues) spans 478-488 (ESSGKPMSTKQ). Phosphoserine occurs at positions 547 and 549. A coiled-coil region spans residues 551 to 575 (DLLERERESVLRREREVAEERRNAL). Disordered stretches follow at residues 575 to 607 (LFPEVFSPTPDESCDQNSRSSSQASGITGSYSV) and 629 to 651 (PVDSAPPGQRKKEQWYAGINPSD). Ser-581 bears the Phosphoserine; by PLK1 mark. Position 583 is a phosphothreonine (Thr-583). The span at 589-607 (DQNSRSSSQASGITGSYSV) shows a compositional bias: polar residues. Residue Ser-592 is modified to Phosphoserine; by PLK1. The residue at position 681 (Ser-681) is a Phosphoserine.

Belongs to the MISP family. In terms of assembly, associates with F-actin. Interacts with DCTN1; this interaction regulates DCTN1 distribution at the cell cortex. Interacts with PTK2/FAK and MAPRE1. Post-translationally, phosphorylated by CDK1 and PLK1. CDK1 is the priming kinase for PLK1 phosphorylation. Phosphorylation by PLK1 is required for proper spindle orientation at metaphase.

The protein localises to the cell junction. Its subcellular location is the focal adhesion. It localises to the cytoplasm. It is found in the cytoskeleton. The protein resides in the cell cortex. Functionally, plays a role in mitotic spindle orientation and mitotic progression. Regulates the distribution of dynactin at the cell cortex in a PLK1-dependent manner, thus stabilizing cortical and astral microtubule attachments required for proper mitotic spindle positioning. May link microtubules to the actin cytospkeleton and focal adhesions. May be required for directed cell migration and centrosome orientation. May also be necessary for proper stacking of the Golgi apparatus. In Pongo abelii (Sumatran orangutan), this protein is Mitotic interactor and substrate of PLK1.